Consider the following 232-residue polypeptide: Uracil-DNA glycosylase (232 aa).

Asp71 acts as the Proton acceptor in catalysis.

It belongs to the uracil-DNA glycosylase (UDG) superfamily. UNG family.

The protein resides in the cytoplasm. The enzyme catalyses Hydrolyzes single-stranded DNA or mismatched double-stranded DNA and polynucleotides, releasing free uracil.. Excises uracil residues from the DNA which can arise as a result of misincorporation of dUMP residues by DNA polymerase or due to deamination of cytosine. The sequence is that of Uracil-DNA glycosylase from Azotobacter vinelandii (strain DJ / ATCC BAA-1303).